The following is a 176-amino-acid chain: ATP-dependent protease subunit HslV (176 aa).

The active site involves threonine 5. Na(+) contacts are provided by alanine 161, cysteine 164, and threonine 167.

This sequence belongs to the peptidase T1B family. HslV subfamily. A double ring-shaped homohexamer of HslV is capped on each side by a ring-shaped HslU homohexamer. The assembly of the HslU/HslV complex is dependent on binding of ATP.

The protein resides in the cytoplasm. It carries out the reaction ATP-dependent cleavage of peptide bonds with broad specificity.. Allosterically activated by HslU binding. Protease subunit of a proteasome-like degradation complex believed to be a general protein degrading machinery. The sequence is that of ATP-dependent protease subunit HslV from Pelotomaculum thermopropionicum (strain DSM 13744 / JCM 10971 / SI).